The sequence spans 482 residues: MGDYNMNEFAYGNLYDDDDGDVGGSSKEGNNSIQKVSMLPLVFLIFYEVSGGPFGAEGSVNAAGPLLALLGFVIFPFIWCIPEALITAEMSTMFPINGGFVVWVSSALGTFWGFQVGWMKWLCGVIDNALYPVLFLDYLKSAVPALATGLPRVASILILTLLLTYLNYRGLTIVGWTAVFMGVFSMLPFAVMSLVSIPQLEPSRWLVMDLGNVNWNLYLNTLLWNLNYWDSVSTLAGEVANPKKTLPKALCYGVIFVALSNFLPLLSGTGAIPLDRELWTDGYLAEVAKAIGGGWLQLWVQAAAATSNMGMFLAEMSSDSFQLLGMAELGILPEIFAQRSRYGTPLLGILFSASGVLLLSGLSFQEIIAAENLLYCGGMILEFIAFVRLRKKHPAASRPYKIPVGTVGSILICVPPIVLICLVIVLSTIKVALVSFVMVVIGFLMKPCLNHMDGKKWVKFSVCSDLAEFQKENLDCEESLLR.

11 helical membrane passes run 36-56, 66-86, 94-114, 143-163, 171-191, 254-274, 294-314, 344-364, 367-387, 406-426, and 429-449; these read VSML…PFGA, LLAL…EALI, FPIN…FWGF, VPAL…TLLL, LTIV…PFAV, VIFV…AIPL, GWLQ…MFLA, TPLL…GLSF, IIAA…IAFV, TVGS…VIVL, and IKVA…KPCL.

The protein belongs to the amino acid-polyamine-organocation (APC) superfamily. Polyamine:cation symporter (PHS) (TC 2.A.3.12) family.

The protein resides in the cell membrane. Its function is as follows. Probable cell membrane polyamine/proton symporter involved in the polyamine uptake in cells. In Arabidopsis thaliana (Mouse-ear cress), this protein is Probable polyamine transporter At1g31820.